The sequence spans 177 residues: ATP synthase subunit delta, chloroplastic (177 aa).

The protein belongs to the ATPase delta chain family. As to quaternary structure, F-type ATPases have 2 components, F(1) - the catalytic core - and F(0) - the membrane proton channel. F(1) has five subunits: alpha(3), beta(3), gamma(1), delta(1), epsilon(1). CF(0) has four main subunits: a(1), b(1), b'(1) and c(10-14). The alpha and beta chains form an alternating ring which encloses part of the gamma chain. F(1) is attached to F(0) by a central stalk formed by the gamma and epsilon chains, while a peripheral stalk is formed by the delta, b and b' chains.

It localises to the plastid. It is found in the chloroplast thylakoid membrane. In terms of biological role, f(1)F(0) ATP synthase produces ATP from ADP in the presence of a proton or sodium gradient. F-type ATPases consist of two structural domains, F(1) containing the extramembraneous catalytic core and F(0) containing the membrane proton channel, linked together by a central stalk and a peripheral stalk. During catalysis, ATP synthesis in the catalytic domain of F(1) is coupled via a rotary mechanism of the central stalk subunits to proton translocation. Its function is as follows. This protein is part of the stalk that links CF(0) to CF(1). It either transmits conformational changes from CF(0) to CF(1) or is implicated in proton conduction. This chain is ATP synthase subunit delta, chloroplastic, found in Galdieria sulphuraria (Red alga).